The following is a 578-amino-acid chain: Membrane protein insertase YidC (578 aa).

A helical transmembrane segment spans residues 3-23 (IQRSILIVALAVVSYLLVLQW). Residues 34-71 (AASASMNTTQGLPDTPSAAGTSSDVPTAQSGAAGSEAA) form a disordered region. Over residues 37–65 (ASMNTTQGLPDTPSAAGTSSDVPTAQSGA) the composition is skewed to polar residues. 5 helical membrane-spanning segments follow: residues 361–381 (LELT…FWLL), 387–407 (LIGN…LAFF), 457–477 (LGGC…YWVL), 500–520 (PFFI…MLNP), and 535–555 (PIIF…YWVV).

Belongs to the OXA1/ALB3/YidC family. Type 1 subfamily. As to quaternary structure, interacts with the Sec translocase complex via SecD. Specifically interacts with transmembrane segments of nascent integral membrane proteins during membrane integration.

The protein localises to the cell inner membrane. Functionally, required for the insertion and/or proper folding and/or complex formation of integral membrane proteins into the membrane. Involved in integration of membrane proteins that insert both dependently and independently of the Sec translocase complex, as well as at least some lipoproteins. Aids folding of multispanning membrane proteins. The polypeptide is Membrane protein insertase YidC (Pseudomonas paraeruginosa (strain DSM 24068 / PA7) (Pseudomonas aeruginosa (strain PA7))).